A 597-amino-acid chain; its full sequence is Elongation factor 4 (597 aa).

The tr-type G domain maps to 2-184 (KHIRNFSIIA…EIVARIPAPV (183 aa)). Residues 14–19 (DHGKST) and 131–134 (NKID) each bind GTP.

The protein belongs to the TRAFAC class translation factor GTPase superfamily. Classic translation factor GTPase family. LepA subfamily.

The protein resides in the cell inner membrane. It carries out the reaction GTP + H2O = GDP + phosphate + H(+). Its function is as follows. Required for accurate and efficient protein synthesis under certain stress conditions. May act as a fidelity factor of the translation reaction, by catalyzing a one-codon backward translocation of tRNAs on improperly translocated ribosomes. Back-translocation proceeds from a post-translocation (POST) complex to a pre-translocation (PRE) complex, thus giving elongation factor G a second chance to translocate the tRNAs correctly. Binds to ribosomes in a GTP-dependent manner. This is Elongation factor 4 from Aeromonas salmonicida (strain A449).